The primary structure comprises 492 residues: MGLFGMMKFAQTHHLVKRRGLRAPEGYFTPIAVDLWNVMYTLVVKYQRRYPSYDREAITLHCLCSMLRVFTQKSLFPIFVTDRGVECTEPVVFGAKAILARTTAQCRTDEEASDVDASPPPSPITDSRPSFAFSNMRRRGHAFAPGDRGTRAAGPGPAAPSGAPSKPALRLAHLFCIRVLRALGYAYINSGQLEADDACANLYHTNTVAYVHTTDTDLLLMGCDIVLDISTGYIPTIHCRDLLQYFKMSYPQFLALFVRCHTDLHPNNTYASVEDVLRECHWTAPSRSQARRAARRERANSRSLESMPTLTAAPVGLETRISWTEILAQQIAGEDDYEEDPPLQPPDVAGGPRDGARSSSSEILTPPELVQVPNAQRVAEHRGYVAGRRRHVIHDAPEALDWLPDPMTIAELVEHRYVKYVISLISPKERGPWTLLKRLPIYQDLRDEDLARSIVTRHITAPDIADRFLAQLWAHAPPPAFYKDVLAKFWDE.

4 disordered regions span residues 110–130, 143–165, 288–307, and 334–369; these read EEASDVDASPPPSPITDSRPS, FAPGDRGTRAAGPGPAAPSGAPS, SQARRAARRERANSRSLESM, and EDDYEEDPPLQPPDVAGGPRDGARSSSSEILTPPEL. A compositionally biased stretch (low complexity) spans 144–165; that stretch reads APGDRGTRAAGPGPAAPSGAPS.

This sequence belongs to the herpesviridae VHS protein family. In terms of assembly, interacts with human EIF4H, EIF4A1 and EIF4A2; interaction with eIF4AI and EIF4A2 presumably allows Vhs protein to associate with the eIF4F cap-binding complex.

It is found in the virion. Its function is as follows. Minor structural protein that acts as an endoribonuclease during lytic infection. Degrades host mRNAs in the cytoplasm by cutting them at preferred sites, including some in regions of translation initiation. Together with inhibition of host splicing by ICP27, contributes to an overall decrease in host protein synthesis. Also, after the onset of viral transcription, accelerates the turnover of viral mRNA, thereby facilitating the sequential expression of different classes of viral genes. Binds translation initiation factors eIF4H, eIF4AI, and eIF4AII, thereby may interact directly with the translation initiation complex and thus digest specifically mRNAs. Also impedes antigen presentation by major histocompatibility complex class I and class II molecules, inhibits secretion of cytokines that would otherwise recruit lymphocytes and neutrophils cells to the site of infection and blocks the activation of dendritic cells. Impedes the alpha/beta interferon-mediated response to infection. Inhibits the integrated stress response (ISR) in the infected cell, this function requires the endonuclease activity. Stress granule formation is thus inhibited, which allows protein synthesis and viral replication. This chain is Virion host shutoff protein (UL41), found in Human herpesvirus 2 (strain G) (HHV-2).